The primary structure comprises 236 residues: Kinetochore protein Spc25 (236 aa).

Positions 44-106 (KNIISAKEAI…DMEAQLLRHT (63 aa)) form a coiled coil. The disordered stretch occupies residues 194–217 (EVAGASPVTPSGSERPKATSKHSN).

It belongs to the SPC25 family. As to quaternary structure, component of the Ndc80 complex, which is composed of Ndc80, Nuf2 and Spc25.

The protein localises to the nucleus. Its subcellular location is the chromosome. It is found in the centromere. The protein resides in the kinetochore. Its function is as follows. Acts as a component of the essential kinetochore-associated Ndc80 complex, which is required for chromosome segregation and spindle checkpoint activity during meiosis and mitosis. Required for kinetochore integrity and the organization of stable microtubule binding sites in the outer plate of the kinetochore. Participates in SAC signaling that responds specifically to disruptions in spindle microtubule dynamics. The NDC80 complex synergistically enhances the affinity of the SKA1 complex for microtubules and may allow the NDC80 complex to track depolymerizing microtubules. The sequence is that of Kinetochore protein Spc25 from Drosophila persimilis (Fruit fly).